The sequence spans 67 residues: UPF0434 protein Patl_1782 (67 aa).

The protein belongs to the UPF0434 family.

The protein is UPF0434 protein Patl_1782 of Pseudoalteromonas atlantica (strain T6c / ATCC BAA-1087).